Here is a 292-residue protein sequence, read N- to C-terminus: Elongation factor Ts (292 aa).

The segment at 82–85 (TDFV) is involved in Mg(2+) ion dislocation from EF-Tu.

Belongs to the EF-Ts family.

The protein resides in the cytoplasm. In terms of biological role, associates with the EF-Tu.GDP complex and induces the exchange of GDP to GTP. It remains bound to the aminoacyl-tRNA.EF-Tu.GTP complex up to the GTP hydrolysis stage on the ribosome. This Bordetella bronchiseptica (strain ATCC BAA-588 / NCTC 13252 / RB50) (Alcaligenes bronchisepticus) protein is Elongation factor Ts.